The following is an 812-amino-acid chain: Plasminogen (812 aa).

The N-terminal stretch at 1 to 19 is a signal peptide; the sequence is MDHKEIILLFLLFLKPGQG. Positions 20-98 constitute a PAN domain; that stretch reads DSLDGYVSTQ…RDVILFEKRV (79 aa). 21 disulfide bridges follow: cysteine 49-cysteine 73, cysteine 53-cysteine 61, cysteine 103-cysteine 181, cysteine 124-cysteine 164, cysteine 152-cysteine 176, cysteine 185-cysteine 262, cysteine 188-cysteine 316, cysteine 206-cysteine 245, cysteine 234-cysteine 257, cysteine 275-cysteine 352, cysteine 296-cysteine 335, cysteine 324-cysteine 347, cysteine 376-cysteine 454, cysteine 397-cysteine 437, cysteine 425-cysteine 449, cysteine 481-cysteine 560, cysteine 502-cysteine 543, cysteine 531-cysteine 555, cysteine 568-cysteine 687, cysteine 578-cysteine 586, and cysteine 609-cysteine 625. Kringle domains follow at residues 102–181, 184–262, 274–352, 375–454, and 480–560; these read ECKT…IPEC, ECMY…IPRC, QCLK…IPSC, ECYQ…LKRC, and DCMY…IPLC. Residues 582–810 enclose the Peptidase S1 domain; sequence VVGGCVANPH…YVNWIEREMR (229 aa). A Phosphoserine modification is found at serine 598. Residues histidine 624 and aspartate 667 each act as charge relay system in the active site. Residue serine 690 is modified to Phosphoserine. 3 cysteine pairs are disulfide-bonded: cysteine 701–cysteine 768, cysteine 731–cysteine 747, and cysteine 758–cysteine 786. The active-site Charge relay system is the serine 762.

This sequence belongs to the peptidase S1 family. Plasminogen subfamily. As to quaternary structure, interacts (both mature PLG and the angiostatin peptide) with AMOT and CSPG4. Interacts (via the Kringle domains) with HRG; the interaction tethers PLG to the cell surface and enhances its activation. Interacts (via Kringle 4 domain) with ADA; the interaction stimulates PLG activation when in complex with DPP4. Angiostatin: Interacts with ATP5F1A; the interaction inhibits most of the angiogenic effects of angiostatin. Post-translationally, in the presence of the inhibitor, the activation involves only cleavage after Arg-581, yielding two chains held together by two disulfide bonds. In the absence of the inhibitor, the activation involves additionally the removal of the activation peptide.

It localises to the secreted. It catalyses the reaction Preferential cleavage: Lys-|-Xaa &gt; Arg-|-Xaa, higher selectivity than trypsin. Converts fibrin into soluble products.. With respect to regulation, converted into plasmin by plasminogen activators, both plasminogen and its activator being bound to fibrin. Cannot be activated with streptokinase. Its function is as follows. Plasmin dissolves the fibrin of blood clots and acts as a proteolytic factor in a variety of other processes including embryonic development, tissue remodeling, tumor invasion, and inflammation. In ovulation, weakens the walls of the Graafian follicle. It activates the urokinase-type plasminogen activator, collagenases and several complement zymogens, such as C1, C4 and C5. Cleavage of fibronectin and laminin leads to cell detachment and apoptosis. Also cleaves fibrin, thrombospondin and von Willebrand factor. Its role in tissue remodeling and tumor invasion may be modulated by CSPG4. Binds to cells. In terms of biological role, angiostatin is an angiogenesis inhibitor that blocks neovascularization and growth of experimental primary and metastatic tumors in vivo. The sequence is that of Plasminogen (Plg) from Rattus norvegicus (Rat).